Here is a 247-residue protein sequence, read N- to C-terminus: Small ribosomal subunit protein uS2 (247 aa).

The protein belongs to the universal ribosomal protein uS2 family.

This Halorhodospira halophila (strain DSM 244 / SL1) (Ectothiorhodospira halophila (strain DSM 244 / SL1)) protein is Small ribosomal subunit protein uS2.